Consider the following 502-residue polypeptide: Probable cytochrome P450 514A4 (502 aa).

A helical transmembrane segment spans residues 4-24 (IFTIILTITILVLSLILKDLL). Residue Cys448 participates in heme binding.

This sequence belongs to the cytochrome P450 family. Heme is required as a cofactor.

It localises to the membrane. This chain is Probable cytochrome P450 514A4 (cyp514A4), found in Dictyostelium discoideum (Social amoeba).